A 460-amino-acid chain; its full sequence is Lipase member I (460 aa).

A signal peptide spans 1-15 (MRVYIFLCLMCWVRS). The N-linked (GlcNAc...) asparagine glycan is linked to Asn-63. Catalysis depends on Ser-159, which acts as the Nucleophile. The active-site Charge relay system is the Asp-183. The cysteines at positions 238 and 251 are disulfide-linked. Residue His-253 is the Charge relay system of the active site. Cystine bridges form between Cys-275-Cys-286 and Cys-289-Cys-297. Residue Asn-396 is glycosylated (N-linked (GlcNAc...) asparagine). An intrachain disulfide couples Cys-436 to Cys-455.

This sequence belongs to the AB hydrolase superfamily. Lipase family. In terms of assembly, interacts with heparin with a high affinity. As to expression, expressed in testis. Expressed exclusively at the connecting piece of the sperm.

The protein localises to the cell membrane. It localises to the secreted. It catalyses the reaction 1-hexadecanoyl-2-(9Z-octadecenoyl)-sn-glycero-3-phosphate + H2O = 2-(9Z-octadecenoyl)-sn-glycero-3-phosphate + hexadecanoate + H(+). With respect to regulation, inhibited by sodium vanadate. In terms of biological role, hydrolyzes specifically phosphatidic acid (PA) to produce 2-acyl lysophosphatidic acid (LPA; a potent bioactive lipid mediator) and fatty acid. Does not hydrolyze other phospholipids, like phosphatidylserine (PS), phosphatidylcholine (PC) and phosphatidylethanolamine (PE) or triacylglycerol (TG). This is Lipase member I (LIPI) from Homo sapiens (Human).